Here is a 245-residue protein sequence, read N- to C-terminus: tRNA1(Val) (adenine(37)-N6)-methyltransferase (245 aa).

This sequence belongs to the methyltransferase superfamily. tRNA (adenine-N(6)-)-methyltransferase family.

The protein resides in the cytoplasm. It catalyses the reaction adenosine(37) in tRNA1(Val) + S-adenosyl-L-methionine = N(6)-methyladenosine(37) in tRNA1(Val) + S-adenosyl-L-homocysteine + H(+). In terms of biological role, specifically methylates the adenine in position 37 of tRNA(1)(Val) (anticodon cmo5UAC). This chain is tRNA1(Val) (adenine(37)-N6)-methyltransferase, found in Citrobacter koseri (strain ATCC BAA-895 / CDC 4225-83 / SGSC4696).